Reading from the N-terminus, the 429-residue chain is Adenylosuccinate synthetase (429 aa).

GTP contacts are provided by residues 12-18 (GDEGKGK) and 40-42 (GHT). The active-site Proton acceptor is aspartate 13. Mg(2+)-binding residues include aspartate 13 and glycine 40. Residues 13–16 (DEGK), 38–41 (NAGH), threonine 128, arginine 142, glutamine 223, threonine 238, and arginine 302 each bind IMP. Residue histidine 41 is the Proton donor of the active site. 298-304 (VNTGRPR) contacts substrate. Residues arginine 304, 330-332 (KLD), and 412-414 (GVG) contribute to the GTP site.

This sequence belongs to the adenylosuccinate synthetase family. In terms of assembly, homodimer. The cofactor is Mg(2+).

It localises to the cytoplasm. It carries out the reaction IMP + L-aspartate + GTP = N(6)-(1,2-dicarboxyethyl)-AMP + GDP + phosphate + 2 H(+). Its pathway is purine metabolism; AMP biosynthesis via de novo pathway; AMP from IMP: step 1/2. Its function is as follows. Plays an important role in the de novo pathway of purine nucleotide biosynthesis. Catalyzes the first committed step in the biosynthesis of AMP from IMP. This Micrococcus luteus (strain ATCC 4698 / DSM 20030 / JCM 1464 / CCM 169 / CCUG 5858 / IAM 1056 / NBRC 3333 / NCIMB 9278 / NCTC 2665 / VKM Ac-2230) (Micrococcus lysodeikticus) protein is Adenylosuccinate synthetase.